The following is a 563-amino-acid chain: E3 ubiquitin-protein ligase IpaH2.5 (563 aa).

Residues 1-270 (MIKSTNIQVI…PDYSGPQIFF (270 aa)) form an interaction with target proteins region. 8 LRR repeats span residues 69 to 90 (LQNQ…PDLP), 91 to 115 (PQIT…MLKV), 117 to 130 (HAQF…PALP), 131 to 150 (ETLE…PFLP), 151 to 170 (ENLT…PLLP), 171 to 195 (PELK…KLEG), 197 to 209 (ALAN…LPEL), and 210 to 233 (PFSM…VLRL). The linker stretch occupies residues 271–281 (SMGNSATISAP). The interval 282 to 563 (EHSLADAVTA…YRQLTDEVLA (282 aa)) is E3 ubiquitin-protein ligase catalytic domain. The region spanning 284–563 (SLADAVTAWF…YRQLTDEVLA (280 aa)) is the NEL domain. Cys368 serves as the catalytic Glycyl thioester intermediate.

Belongs to the LRR-containing bacterial E3 ligase family. In terms of assembly, interacts with human RBCK1/HOIL-1 and RNF31/HOIP components of the LUBAC complex. Ubiquitinated in the presence of host E1 ubiquitin-activating enzyme, E2 ubiquitin-conjugating enzyme and ubiquitin.

It localises to the secreted. The protein localises to the host cytoplasm. It catalyses the reaction S-ubiquitinyl-[E2 ubiquitin-conjugating enzyme]-L-cysteine + [acceptor protein]-L-lysine = [E2 ubiquitin-conjugating enzyme]-L-cysteine + N(6)-ubiquitinyl-[acceptor protein]-L-lysine.. It participates in protein modification; protein ubiquitination. With respect to regulation, exists in an autoinhibited state in the absence of substrate protein, probably due to interactions of the leucine-rich repeat domain with the catalytic domain. Is activated upon binding to a substrate protein. In terms of biological role, E3 ubiquitin-protein ligase effector that inhibits host cell innate immunity during bacterial infection by catalyzing 'Lys-48'-linked polyubiquitination and subsequent degradation of host RNF31/HOIP. Host RNF31/HOIP is the catalytic component of the LUBAC complex, which conjugates linear ('Met-1'-linked) polyubiquitin chains at the surface of bacteria invading the host cytosol to form the ubiquitin coat surrounding bacteria. The bacterial ubiquitin coat acts as an 'eat-me' signal for xenophagy and promotes NF-kappa-B activation. In Shigella flexneri, this protein is E3 ubiquitin-protein ligase IpaH2.5.